The sequence spans 142 residues: Large ribosomal subunit protein uL13 (142 aa).

It belongs to the universal ribosomal protein uL13 family. Part of the 50S ribosomal subunit.

Its function is as follows. This protein is one of the early assembly proteins of the 50S ribosomal subunit, although it is not seen to bind rRNA by itself. It is important during the early stages of 50S assembly. This Saccharophagus degradans (strain 2-40 / ATCC 43961 / DSM 17024) protein is Large ribosomal subunit protein uL13.